The following is a 228-amino-acid chain: MSATKTLEAVARDRVGKGAARAVRRQGQIPAVIYGGNQAPQAIAIDLIRARTLIYAGGFKTTVFEIDAGGKKTRAIPRDYQLDPVSGVPLHVDFLRVVAGQTVTVDVPVHFVNEDQAPGIKQKGGTLNVALHTLSLEVAPDQIPDAIEVDLAGREIGDVIHASDLRLPAGTYTGEPTDTVANLLPPTVLGADVEAEEAAVAEAQSAESAEGKAEAEAEATNEKNKSEA.

The interval 196-228 (EEAAVAEAQSAESAEGKAEAEAEATNEKNKSEA) is disordered. Residues 209-228 (AEGKAEAEAEATNEKNKSEA) are compositionally biased toward basic and acidic residues.

It belongs to the bacterial ribosomal protein bL25 family. CTC subfamily. In terms of assembly, part of the 50S ribosomal subunit; part of the 5S rRNA/L5/L18/L25 subcomplex. Contacts the 5S rRNA. Binds to the 5S rRNA independently of L5 and L18.

In terms of biological role, this is one of the proteins that binds to the 5S RNA in the ribosome where it forms part of the central protuberance. The protein is Large ribosomal subunit protein bL25 of Methylorubrum extorquens (strain PA1) (Methylobacterium extorquens).